The chain runs to 271 residues: MVRSILKKYNIKGGTFDQHFLIDAGYLDRIVAAAELSPQDTVLEIGAGIGNLTERLARRAKKVIAVELDPALVSVLHDRFDAAENIEIIAGDALKVDFPEFDKVVSNLPYSISSEITFKLLRHKFKLGVLMYQYEFAVRMVSPPGCKDYSRLTIDTCYFADASIVMKVPKGAFQPAPEVDSAVIKLIPRPAPFEVRDETFFLQFVAAVFSQRRKKLRNAILNTSSLLKIPDIKEIVSQLPEDFMNKRAEDLTPEELASVANMIFDLKSRNF.

The S-adenosyl-L-methionine site is built by histidine 19, leucine 21, glycine 46, glutamate 67, aspartate 92, and asparagine 107.

Belongs to the class I-like SAM-binding methyltransferase superfamily. rRNA adenine N(6)-methyltransferase family. RsmA subfamily.

Its subcellular location is the cytoplasm. Its function is as follows. Specifically dimethylates two adjacent adenosines in the loop of a conserved hairpin near the 3'-end of 16S rRNA in the 30S particle. May play a critical role in biogenesis of 30S subunits. The polypeptide is Probable ribosomal RNA small subunit methyltransferase A (Methanosarcina mazei (strain ATCC BAA-159 / DSM 3647 / Goe1 / Go1 / JCM 11833 / OCM 88) (Methanosarcina frisia)).